The primary structure comprises 308 residues: 15-cis-phytoene synthase (308 aa).

Belongs to the phytoene/squalene synthase family. ATP is required as a cofactor. It depends on Mn(2+) as a cofactor. Mg(2+) serves as cofactor.

The enzyme catalyses 2 (2E,6E,10E)-geranylgeranyl diphosphate = 15-cis-phytoene + 2 diphosphate. The protein operates within carotenoid biosynthesis; phytoene biosynthesis. In terms of biological role, involved in the biosynthesis of carotenoids. Catalyzes the condensation of two molecules of geranylgeranyl diphosphate (GGPP) to give prephytoene diphosphate (PPPP) and the subsequent rearrangement of the cyclopropylcarbinyl intermediate to yield 15-cis-phytoene. The protein is 15-cis-phytoene synthase (crtB) of Synechococcus elongatus (strain ATCC 33912 / PCC 7942 / FACHB-805) (Anacystis nidulans R2).